The following is a 158-amino-acid chain: MKKIPNKLLAVSAFLTITTTYAVIPIETFAIEIQQTNTENRSLSANEEQMKKALQDAGLFVKAMNEYSYLLIHNPDVSFEGITINGNTDLPSKIVQDQKNARAHAVTWNTHVKKQLLDTLTGIIEYDTKFENHYETLVEAINTGNGDTLKKGITDLQG.

The signal sequence occupies residues 1–22 (MKKIPNKLLAVSAFLTITTTYA). Residues 120 to 140 (LTGIIEYDTKFENHYETLVEA) traverse the membrane as a helical segment.

It is found in the cell membrane. This is an uncharacterized protein from Bacillus cereus.